Consider the following 422-residue polypeptide: Proline-rich protein 22 (422 aa).

Disordered regions lie at residues 1-35 (MQHP…PAPT), 306-325 (LCEV…SADD), and 363-422 (EEQP…ATPH). Residues 383–400 (GKRKASTAKKGKPGRKAR) are compositionally biased toward basic residues. Residues 413–422 (PREDLGATPH) show a composition bias toward basic and acidic residues.

The sequence is that of Proline-rich protein 22 (PRR22) from Homo sapiens (Human).